We begin with the raw amino-acid sequence, 366 residues long: Flagellar P-ring protein (366 aa).

A signal peptide spans 1-27; it reads MKSKYSIFCMFLLRGFIFLGTVFSLNS.

It belongs to the FlgI family. The basal body constitutes a major portion of the flagellar organelle and consists of four rings (L,P,S, and M) mounted on a central rod.

The protein resides in the periplasm. It is found in the bacterial flagellum basal body. Functionally, assembles around the rod to form the L-ring and probably protects the motor/basal body from shearing forces during rotation. This Leptospira interrogans serogroup Icterohaemorrhagiae serovar copenhageni (strain Fiocruz L1-130) protein is Flagellar P-ring protein.